The following is a 258-amino-acid chain: MSDLKAAALRALKLMDLTTLNDDDTDAKVISLCHDAKSAVGNTAAICIYPRFIPIAKKTLREQGTPEVRIATVTNFPHGNDDIEIAVAETKAAVAYGADEVDVVFPYRALMAGDEKVGFELVKQCKEACGDILLKVIIETGELKEEALIKKASQICIEAGADFIKTSTGKVPVNATPEYARMMLEVIRDMGVAETVGFKPAGGVRTAEDAAAYLAMADEILGDNWVDARHYRFGASSLLTNLLNTLEVSDEVADPAAY.

Asp102 acts as the Proton donor/acceptor in catalysis. Catalysis depends on Lys165, which acts as the Schiff-base intermediate with acetaldehyde. Lys199 acts as the Proton donor/acceptor in catalysis.

Belongs to the DeoC/FbaB aldolase family. DeoC type 2 subfamily.

It is found in the cytoplasm. It catalyses the reaction 2-deoxy-D-ribose 5-phosphate = D-glyceraldehyde 3-phosphate + acetaldehyde. The protein operates within carbohydrate degradation; 2-deoxy-D-ribose 1-phosphate degradation; D-glyceraldehyde 3-phosphate and acetaldehyde from 2-deoxy-alpha-D-ribose 1-phosphate: step 2/2. Its function is as follows. Catalyzes a reversible aldol reaction between acetaldehyde and D-glyceraldehyde 3-phosphate to generate 2-deoxy-D-ribose 5-phosphate. This chain is Deoxyribose-phosphate aldolase, found in Vibrio campbellii (strain ATCC BAA-1116).